The sequence spans 793 residues: Nuclear cap-binding protein subunit 1 (793 aa).

Disordered stretches follow at residues 1–30 (MSRR…SEIE) and 668–692 (LARQ…GPLE). An MIF4G domain is found at 30–242 (EERLESLICR…CLWSQIQKLK (213 aa)). The segment covering 683 to 692 (SSDREDGPLE) has biased composition (basic and acidic residues). Positions 686–716 (REDGPLEEQIERLQEKVESAQSEQKNLFLVI) form a coiled coil.

Belongs to the NCBP1 family. Component of the nuclear cap-binding complex (CBC), a heterodimer composed of NCBP1/CBP80 and NCBP2/CBP20 that interacts with m7GpppG-capped RNA. Component of an alternative nuclear cap-binding complex (CBC) composed of NCBP1/CBP80 and NCBP3.

It localises to the nucleus. The protein resides in the cytoplasm. Functionally, component of the cap-binding complex (CBC), which binds cotranscriptionally to the 5'-cap of pre-mRNAs and is involved in various processes such as pre-mRNA splicing, translation regulation, nonsense-mediated mRNA decay, RNA-mediated gene silencing (RNAi) by microRNAs (miRNAs) and mRNA export. The CBC complex is involved in mRNA export from the nucleus, leading to the recruitment of the mRNA export machinery to the 5'-end of mRNA and to mRNA export in a 5' to 3' direction through the nuclear pore. The CBC complex is also involved in mediating U snRNA and intronless mRNAs export from the nucleus. The CBC complex is essential for a pioneer round of mRNA translation, before steady state translation when the CBC complex is replaced by cytoplasmic cap-binding protein eIF4E. The pioneer round of mRNA translation mediated by the CBC complex plays a central role in nonsense-mediated mRNA decay (NMD), NMD only taking place in mRNAs bound to the CBC complex, but not on eIF4E-bound mRNAs. The CBC complex enhances NMD in mRNAs containing at least one exon-junction complex (EJC), promoting the interaction between UPF1 and UPF2. The CBC complex is also involved in 'failsafe' NMD, which is independent of the EJC complex, while it does not participate in Staufen-mediated mRNA decay (SMD). During cell proliferation, the CBC complex is also involved in microRNAs (miRNAs) biogenesis via its interaction with SRRT/ARS2 and is required for miRNA-mediated RNA interference. The CBC complex also acts as a negative regulator of PARN, thereby acting as an inhibitor of mRNA deadenylation. In the CBC complex, NCBP1/CBP80 does not bind directly capped RNAs (m7GpppG-capped RNA) but is required to stabilize the movement of the N-terminal loop of NCBP2/CBP20 and lock the CBC into a high affinity cap-binding state with the cap structure. Associates with NCBP3 to form an alternative cap-binding complex (CBC) which plays a key role in mRNA export. The conventional CBC with NCBP2 binds both small nuclear RNA (snRNA) and messenger (mRNA) and is involved in their export from the nucleus whereas the alternative CBC with NCBP3 does not bind snRNA and associates only with mRNA thereby playing a role only in mRNA export. The polypeptide is Nuclear cap-binding protein subunit 1 (NCBP1) (Gallus gallus (Chicken)).